The primary structure comprises 274 residues: Methylamine utilization protein MauF (274 aa).

7 helical membrane passes run 30–50, 52–72, 105–125, 127–147, 176–196, 202–222, and 253–273; these read WTRA…ALAM, AAHV…LSTW, LGYA…GGIA, LSGF…LAYG, WVVG…YVQT, VTAA…IAIF, and AAIA…MLAL.

Its subcellular location is the cell membrane. It participates in one-carbon metabolism; methylamine degradation. The protein is Methylamine utilization protein MauF (mauF) of Paracoccus versutus (Thiobacillus versutus).